The primary structure comprises 125 residues: MADLAKIVDDLSKLTVLEAAELSKLLEEKWGVSAAAPVAVAAAGGAAAAAAPAEEKTEFDVVLTDAGAQKINVIKEVRAITGLGLKEAKDLVEAAPKPVKEGVSKADADKFKAQLEAAGAKVDLK.

Belongs to the bacterial ribosomal protein bL12 family. As to quaternary structure, homodimer. Part of the ribosomal stalk of the 50S ribosomal subunit. Forms a multimeric L10(L12)X complex, where L10 forms an elongated spine to which 2 to 4 L12 dimers bind in a sequential fashion. Binds GTP-bound translation factors.

Functionally, forms part of the ribosomal stalk which helps the ribosome interact with GTP-bound translation factors. Is thus essential for accurate translation. This is Large ribosomal subunit protein bL12 from Mesorhizobium japonicum (strain LMG 29417 / CECT 9101 / MAFF 303099) (Mesorhizobium loti (strain MAFF 303099)).